A 1134-amino-acid chain; its full sequence is Vinculin (1134 aa).

An N-terminal globular head region spans residues 1–835 (MPVFHTRTIE…GAVAKVREAF (835 aa)). Phosphoserine is present on Ser-97. The tract at residues 168 to 208 (MTKMAKMIDERQQELTHQEHRVMLVNSMNTVKELLPVLISA) is talin-interaction. N6-acetyllysine is present on Lys-173. Tandem repeats lie at residues 259-369 (ASKD…KVEN), 370-479 (AARK…KTNR), and 480-589 (AVAN…RMQE). The 3 X 112 AA tandem repeats stretch occupies residues 259–589 (ASKDTEAMKR…LKDLKARMQE (331 aa)). Phosphoserine is present on residues Ser-260, Ser-272, Ser-275, Ser-288, Ser-290, Ser-346, and Ser-434. An N6-acetyllysine modification is found at Lys-496. Tyr-537 bears the Phosphotyrosine mark. A phosphoserine mark is found at Ser-574, Ser-579, and Ser-600. Residues Thr-604 and Thr-672 each carry the phosphothreonine modification. Ser-721 is modified (phosphoserine). The tract at residues 741–764 (MANIQPQMLVAGATSIARRANRIL) is interaction with ACTN4. A phosphoserine mark is found at Ser-795 and Ser-809. Tyr-822 is modified (phosphotyrosine). The linker (Pro-rich) stretch occupies residues 836 to 878 (QPQEPDFPPPPPDLEQLRLTDELAPPKPPLPEGEVPPPRPPPP). The interval 857 to 887 (ELAPPKPPLPEGEVPPPRPPPPEEKDEEFPE) is disordered. Residues 860–876 (PPKPPLPEGEVPPPRPP) are compositionally biased toward pro residues. The tract at residues 879–1134 (EEKDEEFPEQ…RWVRKTPWYQ (256 aa)) is C-terminal tail. Facilitates phospholipid membrane insertion stretches follow at residues 1003-1046 (RLVR…KRIR) and 1120-1134 (AGFTLRWVRKTPWYQ). Phosphotyrosine; by SRC-type Tyr-kinases is present on Tyr-1133.

This sequence belongs to the vinculin/alpha-catenin family. Exhibits self-association properties. Part of a complex composed of THSD1, PTK2/FAK1, TLN1 and VCL. Interacts with APBB1IP and NRAP. Interacts with TLN1. Interacts with CTNNB1 and this interaction is necessary for its localization to the cell-cell junctions and for its function in regulating cell surface expression of E-cadherin. Interacts with SYNM. Interacts with SORBS1. Interacts with CTNNA1. Binds to ACTN4; this interaction triggers conformational changes. Interacts with FLII. As to quaternary structure, (Microbial infection) Interacts via its globular head domain with the central portion of S.flexneri IcsA (also called VirG). Phosphorylated; on serines, threonines and tyrosines. Phosphorylation on Tyr-1133 in activated platelets affects head-tail interactions and cell spreading but has no effect on actin binding nor on localization to focal adhesion plaques. In terms of processing, acetylated; mainly by myristic acid but also by a small amount of palmitic acid. Metavinculin is muscle-specific.

The protein localises to the cell membrane. The protein resides in the cell junction. It localises to the adherens junction. Its subcellular location is the focal adhesion. It is found in the cytoplasm. The protein localises to the cytoskeleton. The protein resides in the sarcolemma. It localises to the cell projection. Its subcellular location is the podosome. In terms of biological role, actin filament (F-actin)-binding protein involved in cell-matrix adhesion and cell-cell adhesion. Regulates cell-surface E-cadherin expression and potentiates mechanosensing by the E-cadherin complex. May also play important roles in cell morphology and locomotion. In Homo sapiens (Human), this protein is Vinculin (VCL).